The following is a 541-amino-acid chain: Arginine--tRNA ligase (541 aa).

The 'HIGH' region motif lies at 119 to 129 (ANPTGPLHIGH).

Belongs to the class-I aminoacyl-tRNA synthetase family. In terms of assembly, monomer.

The protein resides in the cytoplasm. The catalysed reaction is tRNA(Arg) + L-arginine + ATP = L-arginyl-tRNA(Arg) + AMP + diphosphate. This is Arginine--tRNA ligase (argS) from Helicobacter pylori (strain ATCC 700392 / 26695) (Campylobacter pylori).